We begin with the raw amino-acid sequence, 385 residues long: Phosphate acyltransferase (385 aa).

A compositionally biased stretch (low complexity) spans 1–17 (MAAGTSIGTTPGGSTSP). Residues 1–28 (MAAGTSIGTTPGGSTSPETPPEHGLTGT) form a disordered region.

This sequence belongs to the PlsX family. In terms of assembly, homodimer. Probably interacts with PlsY.

The protein resides in the cytoplasm. The catalysed reaction is a fatty acyl-[ACP] + phosphate = an acyl phosphate + holo-[ACP]. It participates in lipid metabolism; phospholipid metabolism. In terms of biological role, catalyzes the reversible formation of acyl-phosphate (acyl-PO(4)) from acyl-[acyl-carrier-protein] (acyl-ACP). This enzyme utilizes acyl-ACP as fatty acyl donor, but not acyl-CoA. This is Phosphate acyltransferase from Dinoroseobacter shibae (strain DSM 16493 / NCIMB 14021 / DFL 12).